We begin with the raw amino-acid sequence, 312 residues long: Coproporphyrin III ferrochelatase (312 aa).

Residues tyrosine 13, arginine 30, 46-47 (RY), serine 54, and tyrosine 125 each bind Fe-coproporphyrin III. 2 residues coordinate Fe(2+): histidine 183 and glutamate 264.

The protein belongs to the ferrochelatase family.

The protein resides in the cytoplasm. The enzyme catalyses Fe-coproporphyrin III + 2 H(+) = coproporphyrin III + Fe(2+). It participates in porphyrin-containing compound metabolism; protoheme biosynthesis. Its function is as follows. Involved in coproporphyrin-dependent heme b biosynthesis. Catalyzes the insertion of ferrous iron into coproporphyrin III to form Fe-coproporphyrin III. The polypeptide is Coproporphyrin III ferrochelatase (Bacillus pumilus (strain SAFR-032)).